The following is a 369-amino-acid chain: S-(hydroxymethyl)glutathione dehydrogenase (369 aa).

Zn(2+) is bound by residues Cys-40, His-62, Cys-92, Cys-95, Cys-98, Cys-106, and Cys-169.

This sequence belongs to the zinc-containing alcohol dehydrogenase family. Class-III subfamily. As to quaternary structure, homodimer. It depends on Zn(2+) as a cofactor.

The protein resides in the cytoplasm. It carries out the reaction S-(hydroxymethyl)glutathione + NADP(+) = S-formylglutathione + NADPH + H(+). The enzyme catalyses S-(hydroxymethyl)glutathione + NAD(+) = S-formylglutathione + NADH + H(+). The catalysed reaction is a primary alcohol + NAD(+) = an aldehyde + NADH + H(+). It catalyses the reaction a secondary alcohol + NAD(+) = a ketone + NADH + H(+). It carries out the reaction S-nitrosoglutathione + NADH + H(+) = S-(hydroxysulfenamide)glutathione + NAD(+). In terms of biological role, has high formaldehyde dehydrogenase activity in the presence of glutathione and catalyzes the oxidation of normal alcohols in a reaction that is not GSH-dependent. In addition, hemithiolacetals other than those formed from GSH, including omega-thiol fatty acids, also are substrates. Also acts as a S-nitroso-glutathione reductase by catalyzing the NADH-dependent reduction of S-nitrosoglutathione. In Escherichia coli O1:K1 / APEC, this protein is S-(hydroxymethyl)glutathione dehydrogenase (frmA).